The following is a 206-amino-acid chain: N-(5'-phosphoribosyl)anthranilate isomerase (206 aa).

The protein belongs to the TrpF family.

It carries out the reaction N-(5-phospho-beta-D-ribosyl)anthranilate = 1-(2-carboxyphenylamino)-1-deoxy-D-ribulose 5-phosphate. Its pathway is amino-acid biosynthesis; L-tryptophan biosynthesis; L-tryptophan from chorismate: step 3/5. The chain is N-(5'-phosphoribosyl)anthranilate isomerase from Chlamydia caviae (strain ATCC VR-813 / DSM 19441 / 03DC25 / GPIC) (Chlamydophila caviae).